A 598-amino-acid polypeptide reads, in one-letter code: Pentatricopeptide repeat-containing protein At5g14820, mitochondrial (598 aa).

The transit peptide at 1–98 directs the protein to the mitochondrion; the sequence is MAAAPWLYLS…RGFSSGSSNV (98 aa). 10 PPR repeats span residues 193 to 227, 229 to 261, 262 to 292, 296 to 330, 331 to 365, 366 to 400, 401 to 435, 436 to 470, 471 to 505, and 506 to 540; these read DSRT…GLLT, ETFT…KFKI, GVET…LKER, NMMT…GLKP, DIVA…GPCP, NVRS…GLQP, DAAV…GHPP, DGKT…EIEP, SIHT…GICP, and DDNS…GMKT.

This sequence belongs to the PPR family. P subfamily.

It localises to the mitochondrion. In Arabidopsis thaliana (Mouse-ear cress), this protein is Pentatricopeptide repeat-containing protein At5g14820, mitochondrial.